A 560-amino-acid polypeptide reads, in one-letter code: Formate--tetrahydrofolate ligase (560 aa).

69 to 76 (TPAGEGKS) is a binding site for ATP.

Belongs to the formate--tetrahydrofolate ligase family.

It catalyses the reaction (6S)-5,6,7,8-tetrahydrofolate + formate + ATP = (6R)-10-formyltetrahydrofolate + ADP + phosphate. The protein operates within one-carbon metabolism; tetrahydrofolate interconversion. The chain is Formate--tetrahydrofolate ligase from Listeria monocytogenes serotype 4a (strain HCC23).